Here is a 486-residue protein sequence, read N- to C-terminus: Glutamate--tRNA ligase 2 (486 aa).

Positions 12 to 22 match the 'HIGH' region motif; the sequence is PSPTGELHIGN. The short motif at 252-256 is the 'KMSKS' region element; it reads KLSKR. K255 contributes to the ATP binding site.

It belongs to the class-I aminoacyl-tRNA synthetase family. Glutamate--tRNA ligase type 1 subfamily. In terms of assembly, monomer.

The protein resides in the cytoplasm. The enzyme catalyses tRNA(Glu) + L-glutamate + ATP = L-glutamyl-tRNA(Glu) + AMP + diphosphate. Its function is as follows. Catalyzes the attachment of glutamate to tRNA(Glu) in a two-step reaction: glutamate is first activated by ATP to form Glu-AMP and then transferred to the acceptor end of tRNA(Glu). The chain is Glutamate--tRNA ligase 2 from Syntrophus aciditrophicus (strain SB).